We begin with the raw amino-acid sequence, 229 residues long: Small ribosomal subunit protein uS3 (229 aa).

The KH type-2 domain maps to 39–107 (VRQYLTEKLK…TAQINIAEIR (69 aa)).

The protein belongs to the universal ribosomal protein uS3 family. Part of the 30S ribosomal subunit. Forms a tight complex with proteins S10 and S14.

In terms of biological role, binds the lower part of the 30S subunit head. Binds mRNA in the 70S ribosome, positioning it for translation. This chain is Small ribosomal subunit protein uS3, found in Shewanella frigidimarina (strain NCIMB 400).